A 101-amino-acid chain; its full sequence is Aspartyl/glutamyl-tRNA(Asn/Gln) amidotransferase subunit C (101 aa).

Positions 75-101 are disordered; the sequence is QEALSGAPDAEEQRFRVPRILDEDVAS. The segment covering 85 to 101 has biased composition (basic and acidic residues); the sequence is EEQRFRVPRILDEDVAS.

The protein belongs to the GatC family. As to quaternary structure, heterotrimer of A, B and C subunits.

The enzyme catalyses L-glutamyl-tRNA(Gln) + L-glutamine + ATP + H2O = L-glutaminyl-tRNA(Gln) + L-glutamate + ADP + phosphate + H(+). It catalyses the reaction L-aspartyl-tRNA(Asn) + L-glutamine + ATP + H2O = L-asparaginyl-tRNA(Asn) + L-glutamate + ADP + phosphate + 2 H(+). Functionally, allows the formation of correctly charged Asn-tRNA(Asn) or Gln-tRNA(Gln) through the transamidation of misacylated Asp-tRNA(Asn) or Glu-tRNA(Gln) in organisms which lack either or both of asparaginyl-tRNA or glutaminyl-tRNA synthetases. The reaction takes place in the presence of glutamine and ATP through an activated phospho-Asp-tRNA(Asn) or phospho-Glu-tRNA(Gln). This chain is Aspartyl/glutamyl-tRNA(Asn/Gln) amidotransferase subunit C, found in Salinispora arenicola (strain CNS-205).